We begin with the raw amino-acid sequence, 94 residues long: Aspartyl/glutamyl-tRNA(Asn/Gln) amidotransferase subunit C (94 aa).

Belongs to the GatC family. In terms of assembly, heterotrimer of A, B and C subunits.

The enzyme catalyses L-glutamyl-tRNA(Gln) + L-glutamine + ATP + H2O = L-glutaminyl-tRNA(Gln) + L-glutamate + ADP + phosphate + H(+). It catalyses the reaction L-aspartyl-tRNA(Asn) + L-glutamine + ATP + H2O = L-asparaginyl-tRNA(Asn) + L-glutamate + ADP + phosphate + 2 H(+). Allows the formation of correctly charged Asn-tRNA(Asn) or Gln-tRNA(Gln) through the transamidation of misacylated Asp-tRNA(Asn) or Glu-tRNA(Gln) in organisms which lack either or both of asparaginyl-tRNA or glutaminyl-tRNA synthetases. The reaction takes place in the presence of glutamine and ATP through an activated phospho-Asp-tRNA(Asn) or phospho-Glu-tRNA(Gln). The polypeptide is Aspartyl/glutamyl-tRNA(Asn/Gln) amidotransferase subunit C (Heliobacterium modesticaldum (strain ATCC 51547 / Ice1)).